The sequence spans 503 residues: MHTHNNFKTPSDADELDDLDDDMVIGVIEEIAQEALVGEDVSDSDIDEHDLADVGAPEHNQNADENESISSDSSFDPNAEDSSDSDDSMLEEDEAEGASSGEATSAKRRKDDNDGPCGSAADSAAVDLDDLDDETDETVRAIIAAIKKPRSAPPEIKLEDFITDVCFHPDRDIIALATIIGDVHLYEYGNEGNKLLRTIEVHSKACRDVEFTEDGRYLLTASKDKCVMVTDLETEKLKKLYETAHDDAINKLHVLDENLFATGDDAGTVKLWDLRTKNPIFELKEVEDQITQMITNDQKKLLLATSADGYLTTFNIAARKLYVQSEPYEEELNCMGIYRGSSKLVVGTSKGKLYSYNWGYFGYHCDMYPGIKSPVSLMIPITDRIACVAGEDGNIRACHITPYRNLGVVGQHNMPIESLDINTSGELLASSSHNNDVRFWNVKYFEDFGDIKYNDKHNAYKEKRHNLPSSKCTNASDFFSDLTKEDEDNADNNDAAAGPSNSA.

Disordered stretches follow at residues 1–21 (MHTHNNFKTPSDADELDDLDD) and 35–132 (ALVG…DDLD). Acidic residues-rich tracts occupy residues 12-21 (DADELDDLDD), 40-50 (DVSDSDIDEHD), and 78-96 (NAEDSSDSDDSMLEEDEAE). WD repeat units lie at residues 157 to 196 (KLEDFITDVCFHPDRDIIALATIIGDVHLYEYGNEGNKLL), 201 to 242 (VHSK…KLYE), 244 to 282 (AHDDAINKLHVLDENLFATGDDAGTVKLWDLRTKNPIFE), 285 to 324 (EVEDQITQMITNDQKKLLLATSADGYLTTFNIAARKLYVQ), 327 to 366 (PYEEELNCMGIYRGSSKLVVGTSKGKLYSYNWGYFGYHCD), and 411 to 450 (QHNMPIESLDINTSGELLASSSHNNDVRFWNVKYFEDFGD). The disordered stretch occupies residues 483-503 (TKEDEDNADNNDAAAGPSNSA).

This sequence belongs to the WD repeat WDR55 family.

This chain is WD repeat-containing protein 55 homolog, found in Drosophila persimilis (Fruit fly).